We begin with the raw amino-acid sequence, 221 residues long: Large ribosomal subunit protein bL25 (221 aa).

Residues 174 to 221 (SVVTVVPPTDEPTEEEVEAMEGEAATEEPEVVGEEKEEDSEEENKDEE) are disordered. Acidic residues predominate over residues 184 to 221 (EPTEEEVEAMEGEAATEEPEVVGEEKEEDSEEENKDEE).

The protein belongs to the bacterial ribosomal protein bL25 family. CTC subfamily. Part of the 50S ribosomal subunit; part of the 5S rRNA/L5/L18/L25 subcomplex. Contacts the 5S rRNA. Binds to the 5S rRNA independently of L5 and L18.

Its function is as follows. This is one of the proteins that binds to the 5S RNA in the ribosome where it forms part of the central protuberance. This Staphylococcus haemolyticus (strain JCSC1435) protein is Large ribosomal subunit protein bL25.